The chain runs to 152 residues: Prostaglandin E synthase (152 aa).

Residues 1–12 are Lumenal-facing; sequence MPAHSLVMSSPA. Residues 13 to 41 traverse the membrane as a helical segment; the sequence is LPAFLLCSTLLVIKMYVVAIITGQVRLRK. Arg38 serves as a coordination point for glutathione. The Cytoplasmic portion of the chain corresponds to 42–60; that stretch reads KAFANPEDALRHGGPQYCR. A helical membrane pass occupies residues 61 to 90; the sequence is SDPDVERCLRAHRNDMETIYPFLFLGFVYS. 73–77 provides a ligand contact to glutathione; the sequence is RNDME. Residues 91–95 lie on the Lumenal side of the membrane; sequence FLGPN. Residues 96 to 119 traverse the membrane as a helical segment; it reads PFVAWMHFLVFLVGRVAHTVAYLG. Glutathione contacts are provided by His113 and Tyr117. Over 120-123 the chain is Cytoplasmic; that stretch reads KLRA. The helical transmembrane segment at 124 to 152 threads the bilayer; the sequence is PIRSVTYTLAQLPCASMALQILWEAARHL. Residue 126–130 participates in glutathione binding; sequence RSVTY.

The protein belongs to the MAPEG family. In terms of assembly, homotrimer. Requires glutathione as cofactor.

The protein resides in the membrane. It is found in the cytoplasm. It localises to the perinuclear region. It carries out the reaction prostaglandin H2 = prostaglandin E2. It catalyses the reaction 2-glyceryl-prostaglandin H2 = 2-glyceryl-prostaglandin E2. The catalysed reaction is prostaglandin G2 = (15S)-15-hydroperoxy-prostaglandin E2. The enzyme catalyses 1-chloro-2,4-dinitrobenzene + glutathione = 2,4-dinitrophenyl-S-glutathione + chloride + H(+). It carries out the reaction (5S)-hydroperoxy-(6E,8Z,11Z,14Z)-eicosatetraenoate + 2 glutathione = (5S)-hydroxy-(6E,8Z,11Z,14Z)-eicosatetraenoate + glutathione disulfide + H2O. It functions in the pathway lipid metabolism; prostaglandin biosynthesis. Its activity is regulated as follows. Induced by interleukin IL1B. In terms of biological role, terminal enzyme of the cyclooxygenase (COX)-2-mediated prostaglandin E2 (PGE2) biosynthetic pathway. Catalyzes the glutathione-dependent oxidoreduction of prostaglandin endoperoxide H2 (PGH2) to prostaglandin E2 (PGE2) in response to inflammatory stimuli. Plays a key role in inflammation response, fever and pain. Also catalyzes the oxidoreduction of endocannabinoids into prostaglandin glycerol esters and PGG2 into 15-hydroperoxy-PGE2. In addition, displays low glutathione transferase and glutathione-dependent peroxidase activities, toward 1-chloro-2,4-dinitrobenzene and 5-hydroperoxyicosatetraenoic acid (5-HPETE), respectively. The protein is Prostaglandin E synthase (PTGES) of Homo sapiens (Human).